We begin with the raw amino-acid sequence, 72 residues long: Translation initiation factor IF-1 (72 aa).

The S1-like domain maps to 1–72 (MAKEDVIEMQ…SKGRIVFRAR (72 aa)).

This sequence belongs to the IF-1 family. Component of the 30S ribosomal translation pre-initiation complex which assembles on the 30S ribosome in the order IF-2 and IF-3, IF-1 and N-formylmethionyl-tRNA(fMet); mRNA recruitment can occur at any time during PIC assembly.

The protein localises to the cytoplasm. Its function is as follows. One of the essential components for the initiation of protein synthesis. Stabilizes the binding of IF-2 and IF-3 on the 30S subunit to which N-formylmethionyl-tRNA(fMet) subsequently binds. Helps modulate mRNA selection, yielding the 30S pre-initiation complex (PIC). Upon addition of the 50S ribosomal subunit IF-1, IF-2 and IF-3 are released leaving the mature 70S translation initiation complex. The chain is Translation initiation factor IF-1 from Vibrio cholerae serotype O1 (strain ATCC 39541 / Classical Ogawa 395 / O395).